Consider the following 356-residue polypeptide: S-adenosylmethionine:tRNA ribosyltransferase-isomerase (356 aa).

This sequence belongs to the QueA family. In terms of assembly, monomer.

The protein localises to the cytoplasm. It carries out the reaction 7-aminomethyl-7-carbaguanosine(34) in tRNA + S-adenosyl-L-methionine = epoxyqueuosine(34) in tRNA + adenine + L-methionine + 2 H(+). It functions in the pathway tRNA modification; tRNA-queuosine biosynthesis. Its function is as follows. Transfers and isomerizes the ribose moiety from AdoMet to the 7-aminomethyl group of 7-deazaguanine (preQ1-tRNA) to give epoxyqueuosine (oQ-tRNA). The chain is S-adenosylmethionine:tRNA ribosyltransferase-isomerase from Escherichia coli O81 (strain ED1a).